The sequence spans 274 residues: 2,3,4,5-tetrahydropyridine-2,6-dicarboxylate N-succinyltransferase (274 aa).

Residues Arg104 and Asp141 each contribute to the substrate site.

This sequence belongs to the transferase hexapeptide repeat family. In terms of assembly, homotrimer.

It is found in the cytoplasm. The enzyme catalyses (S)-2,3,4,5-tetrahydrodipicolinate + succinyl-CoA + H2O = (S)-2-succinylamino-6-oxoheptanedioate + CoA. It functions in the pathway amino-acid biosynthesis; L-lysine biosynthesis via DAP pathway; LL-2,6-diaminopimelate from (S)-tetrahydrodipicolinate (succinylase route): step 1/3. The sequence is that of 2,3,4,5-tetrahydropyridine-2,6-dicarboxylate N-succinyltransferase from Shigella boydii serotype 4 (strain Sb227).